Consider the following 460-residue polypeptide: Metal cation symporter ZIP8 (460 aa).

The signal sequence occupies residues 1 to 22 (MAPGRAVAGLLLLAAAGLGGVA). Over 23 to 132 (EGPGLAFSED…PSHSEVWGYG (110 aa)) the chain is Extracellular. 2 N-linked (GlcNAc...) asparagine glycosylation sites follow: asparagine 40 and asparagine 88. Residues 133-153 (FLSVTIINLASLLGLILTPLI) form a helical membrane-spanning segment. The Cytoplasmic portion of the chain corresponds to 154-160 (KKSYFPK). A helical membrane pass occupies residues 161 to 181 (ILTFFVGLAIGTLFSNAIFQL). Over 182–191 (IPEAFGFDPK) the chain is Extracellular. The chain crosses the membrane as a helical span at residues 192–212 (VDSYVEKAVAVFGGFYLLFFF). The Cytoplasmic segment spans residues 213–365 (ERMLKMLLKT…LNAGMSTRQA (153 aa)). The XEXPHE-motif signature appears at 343–348 (EEFPHE). A helical transmembrane segment spans residues 366 to 386 (LLFNFLSACSCYVGLAFGILV). Residues 387-388 (GN) lie on the Extracellular side of the membrane. The chain crosses the membrane as a helical span at residues 389-409 (NFAPNIIFALAGGMFLYISLA). Residues 410 to 429 (DMFPEMNDMLREKVTGRKTD) are Cytoplasmic-facing. Residues 430-450 (FTFFMIQNAGMLTGFTAILLI) form a helical membrane-spanning segment. Residues 451 to 460 (TLYAGEIELE) lie on the Extracellular side of the membrane.

The protein belongs to the ZIP transporter (TC 2.A.5) family. As to quaternary structure, homodimer. Post-translationally, N-glycosylated. N-glycosylation is not required for proper iron and zinc transport. In terms of tissue distribution, ubiquitously expressed. Expressed in thymus, placenta, lung, liver, pancreas, salivary gland and, to a lower extent, in spleen, testis, ovary, small intestine, colon, leukocyte, heart. Highest expression is observed in pancreas. Expressed by macrophages (at protein level). Expressed by microvascular capillary endothelial cells that constitute the blood-brain barrier (at protein level).

It is found in the cell membrane. The protein resides in the lysosome membrane. Its subcellular location is the apical cell membrane. The protein localises to the basolateral cell membrane. The catalysed reaction is Zn(2+)(out) + 2 hydrogencarbonate(out) = Zn(2+)(in) + 2 hydrogencarbonate(in). It carries out the reaction selenite(out) + Zn(2+)(out) + hydrogencarbonate(out) = selenite(in) + Zn(2+)(in) + hydrogencarbonate(in). The enzyme catalyses Mn(2+)(out) + 2 hydrogencarbonate(out) = Mn(2+)(in) + 2 hydrogencarbonate(in). It catalyses the reaction Fe(2+)(out) + 2 hydrogencarbonate(out) = Fe(2+)(in) + 2 hydrogencarbonate(in). The catalysed reaction is Cd(2+)(out) + 2 hydrogencarbonate(out) = Cd(2+)(in) + 2 hydrogencarbonate(in). It carries out the reaction Co(2+)(out) + 2 hydrogencarbonate(out) = Co(2+)(in) + 2 hydrogencarbonate(in). Its function is as follows. Electroneutral divalent metal cation:bicarbonate symporter of the plasma membrane mediating the cellular uptake of zinc and manganese, two divalent metal cations important for development, tissue homeostasis and immunity. Transports an electroneutral complex composed of a divalent metal cation and two bicarbonate anions or alternatively a bicarbonate and a selenite anion. Thereby, it also contributes to the cellular uptake of selenium, an essential trace metal and micronutrient. Also imports cadmium a non-essential metal which is cytotoxic and carcinogenic. May also transport iron and cobalt through membranes. Through zinc import, indirectly regulates the metal-dependent transcription factor MTF1 and the expression of some metalloproteases involved in cartilage catabolism and also probably heart development. Also indirectly regulates the expression of proteins involved in cell morphology and cytoskeleton organization. Indirectly controls innate immune function and inflammatory response by regulating zinc cellular uptake which in turn modulates the expression of genes specific of these processes. Protects, for instance, cells from injury and death at the onset of inflammation. By regulating zinc influx into monocytes also directly modulates their adhesion to endothelial cells and arteries. Reclaims manganese from the bile at the apical membrane of hepatocytes, thereby regulating the activity of the manganese-dependent enzymes through the systemic levels of the nutrient. Also participates in manganese reabsorption in the proximal tubule of the kidney. By mediating the extracellular uptake of manganese by cells of the blood-brain barrier, may also play a role in the transport of the micronutrient to the brain. With manganese cellular uptake also participates in mitochondrial proper function. Finally, also probably functions intracellularly, translocating zinc from lysosome to cytosol to indirectly enhance the expression of specific genes during TCR-mediated T cell activation. The protein is Metal cation symporter ZIP8 of Homo sapiens (Human).